The following is a 192-amino-acid chain: MKNKVVVIVGVPGVGSTTVTNKAIEELKKEGIEYKIVNFGTVMFEIAKEEGLVEHRDQLRKLPPEEQKRIQKLAGKKIAEMAKEFNIVVDTHSTIKTPKGYLPGLPAWVLEELNPDIIVLVEAENDEILMRRLKDETRQRDFESTEDIGEHIFMNRCAAMTYAVLTGATVKIIKNRDFLLDKAVQELIEVLK.

ATP is bound at residue 10–18 (GVPGVGSTT).

It belongs to the archaeal adenylate kinase family. Monomer.

Its subcellular location is the cytoplasm. The enzyme catalyses AMP + ATP = 2 ADP. This is Adenylate kinase (adkA) from Methanocaldococcus jannaschii (strain ATCC 43067 / DSM 2661 / JAL-1 / JCM 10045 / NBRC 100440) (Methanococcus jannaschii).